Reading from the N-terminus, the 161-residue chain is Protein OPG060 (161 aa).

Belongs to the orthopoxvirus OPG058 family.

The protein is Protein OPG060 (OPG060) of Homo sapiens (Human).